A 152-amino-acid polypeptide reads, in one-letter code: Chemokine-like factor (152 aa).

The MARVEL domain occupies 13 to 133 (FCFSVKGHVK…DGALIYRKLL (121 aa)). 3 helical membrane-spanning segments follow: residues 45–65 (YIVI…LYVL), 81–101 (IINS…ALIP), and 108–128 (VGGG…GALI).

The protein belongs to the chemokine-like factor family. Isoform 1, isoform 2, isoform 3 and isoform 4 have highest expression levels in adult spleen, lung, testis, ovary, peripheral blood leukocyte, placenta, pancreas, and in fetal brain, skeletal muscle, thymus and heart. Lower expression levels in adult skeletal muscle, liver, thymus colon, prostate and fetal spleen and liver.

The protein resides in the secreted. It is found in the membrane. With respect to regulation, partly inhibited by interleukin 10. In terms of biological role, may play an important role in inflammation and regeneration of skeletal muscle. Essential for embryonic development. Has chemotactic response in monocytes, neutrophils and lymphocytes. Binds CCR4. This Homo sapiens (Human) protein is Chemokine-like factor (CKLF).